A 462-amino-acid chain; its full sequence is beta-Tubulin at 65B (462 aa).

GTP contacts are provided by Glu70, Ser137, Gly141, Thr142, Gly143, Asn203, and Asn225. A Mg(2+)-binding site is contributed by Glu70. A disordered region spans residues 420–462 (DYRSSAEGEDSGGGGGGGGGRSGSAESGEEEATPEAHCQYCTE). Residues 430-441 (SGGGGGGGGGRS) are compositionally biased toward gly residues.

This sequence belongs to the tubulin family. Dimer of alpha and beta chains. A typical microtubule is a hollow water-filled tube with an outer diameter of 25 nm and an inner diameter of 15 nM. Alpha-beta heterodimers associate head-to-tail to form protofilaments running lengthwise along the microtubule wall with the beta-tubulin subunit facing the microtubule plus end conferring a structural polarity. Microtubules usually have 13 protofilaments but different protofilament numbers can be found in some organisms and specialized cells. It depends on Mg(2+) as a cofactor.

It localises to the cytoplasm. The protein localises to the cytoskeleton. Tubulin is the major constituent of microtubules, a cylinder consisting of laterally associated linear protofilaments composed of alpha- and beta-tubulin heterodimers. Microtubules grow by the addition of GTP-tubulin dimers to the microtubule end, where a stabilizing cap forms. Below the cap, tubulin dimers are in GDP-bound state, owing to GTPase activity of alpha-tubulin. This chain is beta-Tubulin at 65B, found in Drosophila melanogaster (Fruit fly).